A 671-amino-acid polypeptide reads, in one-letter code: Putative ubiquitin thioesterase 232R (671 aa).

Disordered stretches follow at residues 36–62, 100–123, 171–203, and 250–319; these read EIID…RRIS, SPKI…PVRQ, NQKP…RPVF, and EPIR…SKRS. Positions 110-123 are enriched in low complexity; that stretch reads PSPVHSPVRSPVRQ. The span at 182–200 shows a compositional bias: pro residues; it reads RRSPSPRRSPSPRRSPSPR. Over residues 255 to 271 the composition is skewed to low complexity; the sequence is SSSSRSSRSTRRSSSTK. Residues 272 to 319 are compositionally biased toward basic residues; the sequence is PSRRSSSRSRRSSSRSRRSSSRSRRSSSRSRRSSRRSTSRSRSLSKRS. One can recognise an OTU domain in the interval 392–521; sequence FRMINVPLDG…NFHYIALEPF (130 aa). The active site involves aspartate 400. The active-site Nucleophile is the cysteine 403. Histidine 514 is a catalytic residue. Residues 589–625 form a disordered region; that stretch reads KRSLRPSIPPKISTEHRRTPKLRPSVPRPSSIRQSQP.

The catalysed reaction is Thiol-dependent hydrolysis of ester, thioester, amide, peptide and isopeptide bonds formed by the C-terminal Gly of ubiquitin (a 76-residue protein attached to proteins as an intracellular targeting signal).. Its function is as follows. Hydrolase that can remove conjugated ubiquitin from proteins and may therefore play an important regulatory role at the level of protein turnover by preventing degradation. The chain is Putative ubiquitin thioesterase 232R from Acheta domesticus (House cricket).